Consider the following 566-residue polypeptide: Proline--tRNA ligase (566 aa).

Belongs to the class-II aminoacyl-tRNA synthetase family. ProS type 1 subfamily. Homodimer.

The protein localises to the cytoplasm. The enzyme catalyses tRNA(Pro) + L-proline + ATP = L-prolyl-tRNA(Pro) + AMP + diphosphate. Its function is as follows. Catalyzes the attachment of proline to tRNA(Pro) in a two-step reaction: proline is first activated by ATP to form Pro-AMP and then transferred to the acceptor end of tRNA(Pro). As ProRS can inadvertently accommodate and process non-cognate amino acids such as alanine and cysteine, to avoid such errors it has two additional distinct editing activities against alanine. One activity is designated as 'pretransfer' editing and involves the tRNA(Pro)-independent hydrolysis of activated Ala-AMP. The other activity is designated 'posttransfer' editing and involves deacylation of mischarged Ala-tRNA(Pro). The misacylated Cys-tRNA(Pro) is not edited by ProRS. The sequence is that of Proline--tRNA ligase from Bacillus mycoides (strain KBAB4) (Bacillus weihenstephanensis).